We begin with the raw amino-acid sequence, 138 residues long: Putative pre-16S rRNA nuclease (138 aa).

This sequence belongs to the YqgF nuclease family.

The protein resides in the cytoplasm. Could be a nuclease involved in processing of the 5'-end of pre-16S rRNA. The protein is Putative pre-16S rRNA nuclease of Citrobacter koseri (strain ATCC BAA-895 / CDC 4225-83 / SGSC4696).